Here is a 155-residue protein sequence, read N- to C-terminus: Ribosome maturation factor RimP (155 aa).

The protein belongs to the RimP family.

Its subcellular location is the cytoplasm. Its function is as follows. Required for maturation of 30S ribosomal subunits. This chain is Ribosome maturation factor RimP, found in Listeria monocytogenes serotype 4a (strain HCC23).